The primary structure comprises 371 residues: MPVLSTAHRLPLSVERDCSREDDSLTNLQWLQDFSILSTDLSSIANSRPPLPRASQGPCSPPAGDTASCQAPRTGKQRSVAVPTAWASLPTPSPSPVQEVDYRTNANIKPPYSYATLICMAMEASQQRKLTLSAIYSWITQNFCYYRHADPSWQNSIRHNLSLNKCFMKVPRGKDEPGKGGFWQMDPRYADMFVNGVLKRRRMPASHLDPPRCNKAIAHHPYLPVSRPSSHHMQHISGGHRQSRRYEKPNPVLPALRAPERQGDALFTPEDPLQGSNFDDLDLQTALISMCWEGDLAASNLNSTLTGTSGMDMNLQDPPMQDNHWYLSTEGQQTWEQVKEEPVVEQWYNETGFVEDVLYECPPWERVETLL.

2 disordered regions span residues 45–74 (ANSR…APRT) and 80–99 (VAVP…PVQE). A DNA-binding region (fork-head) is located at residues 109–203 (KPPYSYATLI…VNGVLKRRRM (95 aa)). Residues 228–248 (PSSHHMQHISGGHRQSRRYEK) are disordered.

The protein belongs to the FOXJ1 family. Expressed diffusely through much of gastrula and neurula stage embryos. At stage 23 (late neurula), limited to the otic vesicle. By stage 28 (tailbud), also expressed transiently in the presumptive nephrostomes of the pronephros. At stage 35 (early tadpole), expressed broadly in the head and strongly expressed in the developing gill structures.

The protein localises to the nucleus. Functionally, key transcription factor required for motile ciliogenesis. Activates genes essential for motile cilia formation and function. This is Forkhead box protein J1.2 from Xenopus tropicalis (Western clawed frog).